The primary structure comprises 118 residues: NADPH-dependent 7-cyano-7-deazaguanine reductase (118 aa).

The Thioimide intermediate role is filled by Cys31. Catalysis depends on Asp38, which acts as the Proton donor. Residues 53–55 (IEL) and 72–73 (YE) each bind substrate.

This sequence belongs to the GTP cyclohydrolase I family. QueF type 1 subfamily.

The protein localises to the cytoplasm. It catalyses the reaction 7-aminomethyl-7-carbaguanine + 2 NADP(+) = 7-cyano-7-deazaguanine + 2 NADPH + 3 H(+). Its pathway is tRNA modification; tRNA-queuosine biosynthesis. In terms of biological role, catalyzes the NADPH-dependent reduction of 7-cyano-7-deazaguanine (preQ0) to 7-aminomethyl-7-deazaguanine (preQ1). The protein is NADPH-dependent 7-cyano-7-deazaguanine reductase of Prosthecochloris aestuarii (strain DSM 271 / SK 413).